The sequence spans 256 residues: Homeobox-leucine zipper protein HOX18 (256 aa).

The disordered stretch occupies residues 52-116 (YDHGRDEEQA…GGGGGGTRKK (65 aa)). Positions 102–112 (DGGSGGGGGGG) are enriched in gly residues. The homeobox DNA-binding region spans 112-171 (GTRKKLQLTKEQSTLLEDSFRVHNILSHAQKHELARQLKLKPRQVEVWFQNRRARTKLKQ). The leucine-zipper stretch occupies residues 170 to 214 (KQTEVDCEFLKRCCESLTEENKQLKHELMELRRLASPAAAAAGSQ).

The protein belongs to the HD-ZIP homeobox family. Class II subfamily. In terms of tissue distribution, expressed in roots, leaf sheaths and blades and panicles.

The protein resides in the nucleus. Its function is as follows. Probable transcription factor. The sequence is that of Homeobox-leucine zipper protein HOX18 (HOX18) from Oryza sativa subsp. japonica (Rice).